The primary structure comprises 634 residues: Kelch-like protein 31 (634 aa).

Position 2 is a n,N,N-trimethylalanine (alanine 2). A BTB domain is found at 73–137 (CDLVIGTKTK…AYTGKLTLSL (65 aa)). The BACK domain occupies 172 to 273 (CMYVVNIAET…SAQDLVNYVQ (102 aa)). Kelch repeat units follow at residues 317–365 (VLVT…VMDG), 366–419 (FLYV…VFNG), 420–466 (LVYA…VADG), 468–513 (VLVT…TLSD), 515–565 (VYVM…ALHG), and 567–614 (AYLV…TLSM).

N-terminus is methylated by METTL11A/NTM1. As to expression, strongly expressed in skeletal muscle and weakly in heart. According to PubMed:15302408, not expressed in other tissues. According to PubMed:18719355, abundantly expressed in both embryonic skeletal and heart tissues.

Functionally, transcriptional repressor in MAPK/JNK signaling pathway to regulate cellular functions. Overexpression inhibits the transcriptional activities of both the TPA-response element (TRE) and serum response element (SRE). This chain is Kelch-like protein 31 (KLHL31), found in Homo sapiens (Human).